The chain runs to 197 residues: LexA repressor (197 aa).

The H-T-H motif DNA-binding region spans 28–47 (VREIARRFRITPRGALLHLI). Catalysis depends on for autocatalytic cleavage activity residues Ser119 and Lys156.

This sequence belongs to the peptidase S24 family. In terms of assembly, homodimer.

It catalyses the reaction Hydrolysis of Ala-|-Gly bond in repressor LexA.. Its function is as follows. Represses a number of genes involved in the response to DNA damage (SOS response), including recA and lexA. In the presence of single-stranded DNA, RecA interacts with LexA causing an autocatalytic cleavage which disrupts the DNA-binding part of LexA, leading to derepression of the SOS regulon and eventually DNA repair. This is LexA repressor from Thermotoga petrophila (strain ATCC BAA-488 / DSM 13995 / JCM 10881 / RKU-1).